We begin with the raw amino-acid sequence, 254 residues long: Trypsin (254 aa).

The signal sequence occupies residues 1 to 16; it reads MLRFIAVFALVNCALA. The propeptide at 17-26 is activation peptide; that stretch reads GTLPNDLDGR. The 226-residue stretch at 27–252 folds into the Peptidase S1 domain; that stretch reads IVNGVDTTIE…VRSWIEKTAK (226 aa). Cysteines 53 and 69 form a disulfide. Active-site charge relay system residues include H68 and D113. 3 disulfide bridges follow: C154/C158, C178/C195, and C204/C228. S208 acts as the Charge relay system in catalysis.

This sequence belongs to the peptidase S1 family.

The protein resides in the secreted. Its subcellular location is the extracellular space. The catalysed reaction is Preferential cleavage: Arg-|-Xaa, Lys-|-Xaa.. In terms of biological role, involved in digestion of a protein meal. The polypeptide is Trypsin (Sarcophaga bullata (Grey flesh fly)).